The primary structure comprises 116 residues: Putative pterin-4-alpha-carbinolamine dehydratase (116 aa).

This sequence belongs to the pterin-4-alpha-carbinolamine dehydratase family.

It catalyses the reaction (4aS,6R)-4a-hydroxy-L-erythro-5,6,7,8-tetrahydrobiopterin = (6R)-L-erythro-6,7-dihydrobiopterin + H2O. In Xylella fastidiosa (strain M23), this protein is Putative pterin-4-alpha-carbinolamine dehydratase.